We begin with the raw amino-acid sequence, 183 residues long: Capsid protein (183 aa).

The segment at 136–183 (NAPILSTLPETTVVRRRGRSPRRRTPSPRRRRSQSPRRRRSQSPASQC) is disordered. The span at 149–176 (VRRRGRSPRRRTPSPRRRRSQSPRRRRS) shows a compositional bias: basic residues. Residues Ser155, Ser162, and Ser170 each carry the phosphoserine; by host modification. A 1; half-length repeat occupies 155 to 161 (SPRRRTP). The segment at 155 to 177 (SPRRRTPSPRRRRSQSPRRRRSQ) is 3 X 8 AA repeats of S-P-R-R-R-[PR]-S-Q. A Bipartite nuclear localization signal motif is present at residues 158–175 (RRTPSPRRRRSQSPRRRR). 2 consecutive repeat copies span residues 162 to 169 (SPRRRRSQ) and 170 to 177 (SPRRRRSQ). Positions 177-183 (QSPASQC) are RNA binding.

Belongs to the orthohepadnavirus core antigen family. In terms of assembly, homodimerizes, then multimerizes. Interacts with cytosol exposed regions of viral L glycoprotein present in the reticulum-to-Golgi compartment. Interacts with human FLNB. Phosphorylated form interacts with host importin alpha; this interaction depends on the exposure of the NLS, which itself depends upon genome maturation and/or phosphorylation of the capsid protein. Interacts with host NUP153. Phosphorylated by host SRPK1, SRPK2, and maybe protein kinase C or GAPDH. Phosphorylation is critical for pregenomic RNA packaging. Protein kinase C phosphorylation is stimulated by HBx protein and may play a role in transport of the viral genome to the nucleus at the late step during the viral replication cycle.

Its subcellular location is the virion. It localises to the host cytoplasm. Functionally, self assembles to form an icosahedral capsid. Most capsids appear to be large particles with an icosahedral symmetry of T=4 and consist of 240 copies of capsid protein, though a fraction forms smaller T=3 particles consisting of 180 capsid proteins. Entering capsids are transported along microtubules to the nucleus. Phosphorylation of the capsid is thought to induce exposure of nuclear localization signal in the C-terminal portion of the capsid protein that allows binding to the nuclear pore complex via the importin (karyopherin-) alpha and beta. Capsids are imported in intact form through the nuclear pore into the nuclear basket, where it probably binds NUP153. Only capsids that contain the mature viral genome can release the viral DNA and capsid protein into the nucleoplasm. Immature capsids get stuck in the basket. Capsids encapsulate the pre-genomic RNA and the P protein. Pre-genomic RNA is reverse-transcribed into DNA while the capsid is still in the cytoplasm. The capsid can then either be directed to the nucleus, providing more genomes for transcription, or bud through the endoplasmic reticulum to provide new virions. The protein is Capsid protein of Homo sapiens (Human).